The sequence spans 230 residues: 5'-methylthioadenosine/S-adenosylhomocysteine nucleosidase (230 aa).

Catalysis depends on glutamate 12, which acts as the Proton acceptor. Substrate contacts are provided by residues glycine 78, isoleucine 153, and 174–175 (ME). Aspartate 198 acts as the Proton donor in catalysis.

It belongs to the PNP/UDP phosphorylase family. MtnN subfamily.

The enzyme catalyses S-adenosyl-L-homocysteine + H2O = S-(5-deoxy-D-ribos-5-yl)-L-homocysteine + adenine. It carries out the reaction S-methyl-5'-thioadenosine + H2O = 5-(methylsulfanyl)-D-ribose + adenine. The catalysed reaction is 5'-deoxyadenosine + H2O = 5-deoxy-D-ribose + adenine. It functions in the pathway amino-acid biosynthesis; L-methionine biosynthesis via salvage pathway; S-methyl-5-thio-alpha-D-ribose 1-phosphate from S-methyl-5'-thioadenosine (hydrolase route): step 1/2. In terms of biological role, catalyzes the irreversible cleavage of the glycosidic bond in both 5'-methylthioadenosine (MTA) and S-adenosylhomocysteine (SAH/AdoHcy) to adenine and the corresponding thioribose, 5'-methylthioribose and S-ribosylhomocysteine, respectively. Also cleaves 5'-deoxyadenosine, a toxic by-product of radical S-adenosylmethionine (SAM) enzymes, into 5-deoxyribose and adenine. The chain is 5'-methylthioadenosine/S-adenosylhomocysteine nucleosidase from Shewanella frigidimarina (strain NCIMB 400).